Reading from the N-terminus, the 324-residue chain is Viral cathepsin (324 aa).

The first 16 residues, 1–16 (MNKIVLYLLVYGATLG), serve as a signal peptide directing secretion. Positions 17–113 (AAYDLLKAPS…VVLDRPPDKG (97 aa)) are cleaved as a propeptide — activation peptide. Intrachain disulfides connect cysteine 134–cysteine 175, cysteine 168–cysteine 208, and cysteine 263–cysteine 311. Cysteine 137 is a catalytic residue. N-linked (GlcNAc...) asparagine; by host glycosylation is present at asparagine 159. Residues histidine 270 and asparagine 290 contribute to the active site.

The protein belongs to the peptidase C1 family. Synthesized as an inactive proenzyme and activated by proteolytic removal of the inhibitory propeptide.

The enzyme catalyses Endopeptidase of broad specificity, hydrolyzing substrates of both cathepsin L and cathepsin B.. Functionally, cysteine protease that plays an essential role in host liquefaction to facilitate horizontal transmission of the virus. May participate in the degradation of foreign protein expressed by the baculovirus system. The sequence is that of Viral cathepsin (VCATH) from Antheraea pernyi nuclear polyhedrosis virus (ApNPV).